Consider the following 199-residue polypeptide: Photosystem I reaction center subunit XI (199 aa).

Transmembrane regions (helical) follow at residues 108–128 and 165–185; these read LTAG…LLVL and FWLG…TLHL.

Belongs to the PsaL family.

Its subcellular location is the cellular thylakoid membrane. This Prochlorococcus marinus (strain AS9601) protein is Photosystem I reaction center subunit XI.